Consider the following 99-residue polypeptide: MANVQYYDVILKPVITEKSMADMADKKYTFLVHTDANKTMIKDAVEKMFEGTKVASVNTMNLDGKKKRRGRTAGTTSKTKKAIVQLTADSKEIEIFEGL.

This sequence belongs to the universal ribosomal protein uL23 family. As to quaternary structure, part of the 50S ribosomal subunit. Contacts protein L29, and trigger factor when it is bound to the ribosome.

Its function is as follows. One of the early assembly proteins it binds 23S rRNA. One of the proteins that surrounds the polypeptide exit tunnel on the outside of the ribosome. Forms the main docking site for trigger factor binding to the ribosome. The chain is Large ribosomal subunit protein uL23 from Lachnospira eligens (strain ATCC 27750 / DSM 3376 / VPI C15-48 / C15-B4) (Eubacterium eligens).